Here is a 95-residue protein sequence, read N- to C-terminus: Aspartyl/glutamyl-tRNA(Asn/Gln) amidotransferase subunit C (95 aa).

This sequence belongs to the GatC family. Heterotrimer of A, B and C subunits.

It carries out the reaction L-glutamyl-tRNA(Gln) + L-glutamine + ATP + H2O = L-glutaminyl-tRNA(Gln) + L-glutamate + ADP + phosphate + H(+). The enzyme catalyses L-aspartyl-tRNA(Asn) + L-glutamine + ATP + H2O = L-asparaginyl-tRNA(Asn) + L-glutamate + ADP + phosphate + 2 H(+). Functionally, allows the formation of correctly charged Asn-tRNA(Asn) or Gln-tRNA(Gln) through the transamidation of misacylated Asp-tRNA(Asn) or Glu-tRNA(Gln) in organisms which lack either or both of asparaginyl-tRNA or glutaminyl-tRNA synthetases. The reaction takes place in the presence of glutamine and ATP through an activated phospho-Asp-tRNA(Asn) or phospho-Glu-tRNA(Gln). In Pelagibacter ubique (strain HTCC1062), this protein is Aspartyl/glutamyl-tRNA(Asn/Gln) amidotransferase subunit C.